We begin with the raw amino-acid sequence, 469 residues long: Histone chaperone rtt-106 (469 aa).

Disordered regions lie at residues 54–73 and 364–469; these read EEPA…PNGA and MAEQ…EGEE. 2 stretches are compositionally biased toward basic and acidic residues: residues 364 to 379 and 402 to 415; these read MAEQ…ENAK and ELER…QRLQ. Acidic residues-rich tracts occupy residues 416-433 and 440-469; these read DEED…EGES and SEEE…EGEE.

The protein belongs to the RTT106 family. Interacts with histones H3 and H4.

The protein resides in the nucleus. It is found in the chromosome. Histones H3 and H4 chaperone involved in the nucleosome formation and heterochromatin silencing. Required for the deposition of H3K56ac-carrying H3-H4 complex onto newly-replicated DNA. Plays a role in the transcriptional regulation of the cell-cycle dependent histone genes by creating a repressive structure at the core histone gene promoter. The sequence is that of Histone chaperone rtt-106 (rtt-106) from Neurospora crassa (strain ATCC 24698 / 74-OR23-1A / CBS 708.71 / DSM 1257 / FGSC 987).